We begin with the raw amino-acid sequence, 827 residues long: Periplasmic nitrate reductase (827 aa).

A signal peptide (tat-type signal) is located at residues 1–32; that stretch reads MNLSRRDFMKANAALAAASVAGLIIPVKNVNA. Positions 37 to 93 constitute a 4Fe-4S Mo/W bis-MGD-type domain; that stretch reads ITWDKAVCRFCGTGCAVLVGTKDGRVVASQGDPDAEVNRGLNCIKGYFLPKIMYGKD. [4Fe-4S] cluster-binding residues include cysteine 44, cysteine 47, cysteine 51, and cysteine 79. Residues lysine 81, glutamine 148, asparagine 173, cysteine 177, 210-217, 242-246, 261-263, methionine 372, glutamine 376, asparagine 482, 508-509, lysine 531, aspartate 558, and 717-726 contribute to the Mo-bis(molybdopterin guanine dinucleotide) site; these read WGSNMAEM, STFEH, QSD, SD, and TGRILEHWHT. Phenylalanine 793 serves as a coordination point for substrate. 2 residues coordinate Mo-bis(molybdopterin guanine dinucleotide): asparagine 801 and lysine 818.

Belongs to the prokaryotic molybdopterin-containing oxidoreductase family. NasA/NapA/NarB subfamily. As to quaternary structure, component of the periplasmic nitrate reductase NapAB complex composed of NapA and NapB. The cofactor is [4Fe-4S] cluster. It depends on Mo-bis(molybdopterin guanine dinucleotide) as a cofactor. In terms of processing, predicted to be exported by the Tat system. The position of the signal peptide cleavage has not been experimentally proven.

The protein localises to the periplasm. It carries out the reaction 2 Fe(II)-[cytochrome] + nitrate + 2 H(+) = 2 Fe(III)-[cytochrome] + nitrite + H2O. Its function is as follows. Catalytic subunit of the periplasmic nitrate reductase complex NapAB. Receives electrons from NapB and catalyzes the reduction of nitrate to nitrite. The chain is Periplasmic nitrate reductase from Histophilus somni (strain 129Pt) (Haemophilus somnus).